The primary structure comprises 321 residues: Probable membrane-associated kinase regulator 3 (321 aa).

The span at 297-314 (KSNVTESELCSSRTSVST) shows a compositional bias: polar residues. The interval 297–321 (KSNVTESELCSSRTSVSTCGDLDKD) is disordered.

Its subcellular location is the cell membrane. The sequence is that of Probable membrane-associated kinase regulator 3 (MAKR3) from Arabidopsis thaliana (Mouse-ear cress).